Here is a 557-residue protein sequence, read N- to C-terminus: D-arabinono-1,4-lactone oxidase (557 aa).

Residues 26–209 enclose the FAD-binding PCMH-type domain; sequence FFCKPQAIFQ…THVTLRTIPK (184 aa). Residue histidine 63 is modified to Pros-8alpha-FAD histidine.

The protein belongs to the oxygen-dependent FAD-linked oxidoreductase family. FAD is required as a cofactor.

It is found in the mitochondrion membrane. It catalyses the reaction D-arabinono-1,4-lactone + O2 = dehydro-D-arabinono-1,4-lactone + H2O2 + H(+). Its pathway is cofactor biosynthesis; D-erythroascorbate biosynthesis; dehydro-D-arabinono-1,4-lactone from D-arabinose: step 2/2. This is D-arabinono-1,4-lactone oxidase (ALO1) from Debaryomyces hansenii (strain ATCC 36239 / CBS 767 / BCRC 21394 / JCM 1990 / NBRC 0083 / IGC 2968) (Yeast).